The primary structure comprises 360 residues: Probable protein phosphatase 2C 54 (360 aa).

A disordered region spans residues methionine 1–arginine 39. In terms of domain architecture, PPM-type phosphatase spans arginine 65–phenylalanine 325. Residues aspartate 109, glycine 110, aspartate 273, and aspartate 316 each contribute to the Mn(2+) site.

Belongs to the PP2C family. Mg(2+) serves as cofactor. It depends on Mn(2+) as a cofactor.

It catalyses the reaction O-phospho-L-seryl-[protein] + H2O = L-seryl-[protein] + phosphate. The enzyme catalyses O-phospho-L-threonyl-[protein] + H2O = L-threonyl-[protein] + phosphate. This is Probable protein phosphatase 2C 54 from Oryza sativa subsp. japonica (Rice).